A 199-amino-acid polypeptide reads, in one-letter code: Holliday junction branch migration complex subunit RuvA (199 aa).

The interval 1–64 (MIGRISGLLL…EDGHFLYGFA (64 aa)) is domain I. The segment at 65-143 (TDEERTAFRQ…KALPQVAGAR (79 aa)) is domain II. The tract at residues 144-154 (LAAVAGGAPDA) is flexible linker. The tract at residues 154-199 (AKSDILNALLALGYNEKEALGAMKGLAEDTGVSDGIRQALKLLSKA) is domain III.

This sequence belongs to the RuvA family. As to quaternary structure, homotetramer. Forms an RuvA(8)-RuvB(12)-Holliday junction (HJ) complex. HJ DNA is sandwiched between 2 RuvA tetramers; dsDNA enters through RuvA and exits via RuvB. An RuvB hexamer assembles on each DNA strand where it exits the tetramer. Each RuvB hexamer is contacted by two RuvA subunits (via domain III) on 2 adjacent RuvB subunits; this complex drives branch migration. In the full resolvosome a probable DNA-RuvA(4)-RuvB(12)-RuvC(2) complex forms which resolves the HJ.

Its subcellular location is the cytoplasm. In terms of biological role, the RuvA-RuvB-RuvC complex processes Holliday junction (HJ) DNA during genetic recombination and DNA repair, while the RuvA-RuvB complex plays an important role in the rescue of blocked DNA replication forks via replication fork reversal (RFR). RuvA specifically binds to HJ cruciform DNA, conferring on it an open structure. The RuvB hexamer acts as an ATP-dependent pump, pulling dsDNA into and through the RuvAB complex. HJ branch migration allows RuvC to scan DNA until it finds its consensus sequence, where it cleaves and resolves the cruciform DNA. This chain is Holliday junction branch migration complex subunit RuvA, found in Azoarcus sp. (strain BH72).